The following is a 431-amino-acid chain: Ribosomal protein uS12 methylthiotransferase RimO (431 aa).

One can recognise an MTTase N-terminal domain in the interval 4–120 (LKLYVIVLGC…LAESINKTKK (117 aa)). Residues cysteine 13, cysteine 49, cysteine 83, cysteine 150, cysteine 154, and cysteine 157 each contribute to the [4Fe-4S] cluster site. In terms of domain architecture, Radical SAM core spans 136-365 (DSDLPYAYVK…MEVQAEISFL (230 aa)). The region spanning 368 to 431 (QRLVGKVIDV…TYDLEGELVE (64 aa)) is the TRAM domain.

The protein belongs to the methylthiotransferase family. RimO subfamily. The cofactor is [4Fe-4S] cluster.

The protein resides in the cytoplasm. The enzyme catalyses L-aspartate(89)-[ribosomal protein uS12]-hydrogen + (sulfur carrier)-SH + AH2 + 2 S-adenosyl-L-methionine = 3-methylsulfanyl-L-aspartate(89)-[ribosomal protein uS12]-hydrogen + (sulfur carrier)-H + 5'-deoxyadenosine + L-methionine + A + S-adenosyl-L-homocysteine + 2 H(+). In terms of biological role, catalyzes the methylthiolation of an aspartic acid residue of ribosomal protein uS12. The sequence is that of Ribosomal protein uS12 methylthiotransferase RimO from Fervidobacterium nodosum (strain ATCC 35602 / DSM 5306 / Rt17-B1).